The sequence spans 832 residues: Protein P (832 aa).

The tract at residues 1 to 177 is terminal protein domain (TP); that stretch reads MPLSYQHFRR…FCGSPYSWEQ (177 aa). The spacer stretch occupies residues 178-335; that stretch reads KLQHGAESFH…YCLSHIVNLL (158 aa). Disordered regions lie at residues 186–229 and 275–305; these read FHQQ…QGRS and YPTVSTSKRRSSSGHAVDFHNLPPSSARSQS. Residues 336 to 679 form a polymerase/reverse transcriptase domain (RT) region; that stretch reads EDWGPCTEHG…YMNLYPVARQ (344 aa). One can recognise a Reverse transcriptase domain in the interval 346-589; sequence EHHIRIPRTP…YSLHFMGYVI (244 aa). The Mg(2+) site is built by Asp418, Asp540, and Asp541.

It belongs to the hepadnaviridae P protein family.

It catalyses the reaction DNA(n) + a 2'-deoxyribonucleoside 5'-triphosphate = DNA(n+1) + diphosphate. It carries out the reaction Endonucleolytic cleavage to 5'-phosphomonoester.. Its activity is regulated as follows. Activated by host HSP70 and HSP40 in vitro to be able to bind the epsilon loop of the pgRNA. Because deletion of the RNase H region renders the protein partly chaperone-independent, the chaperones may be needed indirectly to relieve occlusion of the RNA-binding site by this domain. Inhibited by several reverse-transcriptase inhibitors: Lamivudine, Adefovir and Entecavir. Its function is as follows. Multifunctional enzyme that converts the viral RNA genome into dsDNA in viral cytoplasmic capsids. This enzyme displays a DNA polymerase activity that can copy either DNA or RNA templates, and a ribonuclease H (RNase H) activity that cleaves the RNA strand of RNA-DNA heteroduplexes in a partially processive 3'- to 5'-endonucleasic mode. Neo-synthesized pregenomic RNA (pgRNA) are encapsidated together with the P protein, and reverse-transcribed inside the nucleocapsid. Initiation of reverse-transcription occurs first by binding the epsilon loop on the pgRNA genome, and is initiated by protein priming, thereby the 5'-end of (-)DNA is covalently linked to P protein. Partial (+)DNA is synthesized from the (-)DNA template and generates the relaxed circular DNA (RC-DNA) genome. After budding and infection, the RC-DNA migrates in the nucleus, and is converted into a plasmid-like covalently closed circular DNA (cccDNA). The activity of P protein does not seem to be necessary for cccDNA generation, and is presumably released from (+)DNA by host nuclear DNA repair machinery. The chain is Protein P from Homo sapiens (Human).